The chain runs to 505 residues: L-carnitine/gamma-butyrobetaine antiporter (505 aa).

12 helical membrane passes run 10-30, 50-70, 92-112, 143-163, 195-215, 231-251, 263-283, 316-336, 347-367, 403-423, 446-466, and 475-495; these read IEPK…WLTV, IWGW…FWLV, IFMM…SIEI, GPLP…FFFV, FYLV…TPLV, LDAI…ACGL, SYLS…SFIM, WTVF…IFLA, LCFG…TVLG, FSTA…VTLI, LLVR…LLAL, and AIIA…LSFI.

It belongs to the BCCT transporter (TC 2.A.15) family. CaiT subfamily. As to quaternary structure, homotrimer.

It is found in the cell inner membrane. The catalysed reaction is 4-(trimethylamino)butanoate(in) + (R)-carnitine(out) = 4-(trimethylamino)butanoate(out) + (R)-carnitine(in). Its pathway is amine and polyamine metabolism; carnitine metabolism. Its function is as follows. Catalyzes the exchange of L-carnitine for gamma-butyrobetaine. The sequence is that of L-carnitine/gamma-butyrobetaine antiporter from Citrobacter koseri (strain ATCC BAA-895 / CDC 4225-83 / SGSC4696).